Reading from the N-terminus, the 557-residue chain is Resveratrol cleavage oxygenase 1 (557 aa).

Residues 1-46 (MAILNDPPSSTTILSLHTPDVPPPSKPTPATTSHPQDSRNPRNLTS) form a disordered region. Tyr144 and Lys177 together coordinate piceatannol. Trans-resveratrol contacts are provided by Tyr144 and Lys177. The Fe cation site is built by His211, His262, and His334. Position 404 (Glu404) interacts with piceatannol. Glu404 provides a ligand contact to trans-resveratrol. His523 contributes to the Fe cation binding site.

This sequence belongs to the carotenoid oxygenase family. It depends on Fe(2+) as a cofactor.

The catalysed reaction is trans-resveratrol + O2 = 3,5-dihydroxybenzaldehyde + 4-hydroxybenzaldehyde. The enzyme catalyses piceatannol + O2 = 3,5-dihydroxybenzaldehyde + 3,4-dihydroxybenzaldehyde. Dioxygenase that cleaves the interphenyl C-alpha-C-beta double bond of resveratrol to yield 3,5-dihydroxybenzaldehyde and 4-hydroxybenzaldehyde. Also cleaves piceatannol, a compound that differs from resveratrol only in the occurrence of an additional hydroxyl group, which leads to the production of 3,4-dihydroxybenzaldehyde and 3,5-hydroxybenzaldehyde. The chain is Resveratrol cleavage oxygenase 1 from Botryotinia fuckeliana (strain B05.10) (Noble rot fungus).